Here is a 124-residue protein sequence, read N- to C-terminus: Ribonuclease P protein component (124 aa).

The protein belongs to the RnpA family. As to quaternary structure, consists of a catalytic RNA component (M1 or rnpB) and a protein subunit.

It carries out the reaction Endonucleolytic cleavage of RNA, removing 5'-extranucleotides from tRNA precursor.. Functionally, RNaseP catalyzes the removal of the 5'-leader sequence from pre-tRNA to produce the mature 5'-terminus. It can also cleave other RNA substrates such as 4.5S RNA. The protein component plays an auxiliary but essential role in vivo by binding to the 5'-leader sequence and broadening the substrate specificity of the ribozyme. The polypeptide is Ribonuclease P protein component (Synechocystis sp. (strain ATCC 27184 / PCC 6803 / Kazusa)).